Here is a 318-residue protein sequence, read N- to C-terminus: Homoserine kinase (318 aa).

97–107 is an ATP binding site; that stretch reads PIGSGLGSSAC.

It belongs to the GHMP kinase family. Homoserine kinase subfamily.

The protein localises to the cytoplasm. It carries out the reaction L-homoserine + ATP = O-phospho-L-homoserine + ADP + H(+). Its pathway is amino-acid biosynthesis; L-threonine biosynthesis; L-threonine from L-aspartate: step 4/5. Catalyzes the ATP-dependent phosphorylation of L-homoserine to L-homoserine phosphate. The sequence is that of Homoserine kinase from Vibrio vulnificus (strain CMCP6).